Reading from the N-terminus, the 586-residue chain is Protein translocase subunit SecD (586 aa).

6 helical membrane passes run 7–27 (LILILLVTFFACLLIFPTLKW), 418–438 (SALALCLVFLFICVYYGLSGV), 439–459 (VAGFSLVIYNVFLILAILSAF), 465–485 (LTSIAGLILTMGMAVDINIVI), 521–541 (TFIAVLFLTLLGTGVIQGFAW), and 546–566 (GIVASLFSSLIFSRFILEFII).

This sequence belongs to the SecD/SecF family. SecD subfamily. As to quaternary structure, forms a complex with SecF. Part of the essential Sec protein translocation apparatus which comprises SecA, SecYEG and auxiliary proteins SecDF. Other proteins may also be involved.

It is found in the cell inner membrane. Functionally, part of the Sec protein translocase complex. Interacts with the SecYEG preprotein conducting channel. SecDF uses the proton motive force (PMF) to complete protein translocation after the ATP-dependent function of SecA. The polypeptide is Protein translocase subunit SecD (Borreliella burgdorferi (strain ATCC 35210 / DSM 4680 / CIP 102532 / B31) (Borrelia burgdorferi)).